The following is a 357-amino-acid chain: Alanine racemase (357 aa).

K33 (proton acceptor; specific for D-alanine) is an active-site residue. K33 is modified (N6-(pyridoxal phosphate)lysine). Residue R129 coordinates substrate. The active-site Proton acceptor; specific for L-alanine is Y253. M301 lines the substrate pocket.

This sequence belongs to the alanine racemase family. Pyridoxal 5'-phosphate serves as cofactor.

The enzyme catalyses L-alanine = D-alanine. Its pathway is amino-acid biosynthesis; D-alanine biosynthesis; D-alanine from L-alanine: step 1/1. Functionally, catalyzes the interconversion of L-alanine and D-alanine. May also act on other amino acids. The sequence is that of Alanine racemase (alr) from Pseudomonas savastanoi pv. phaseolicola (strain 1448A / Race 6) (Pseudomonas syringae pv. phaseolicola (strain 1448A / Race 6)).